The sequence spans 161 residues: GTP-dependent dephospho-CoA kinase (161 aa).

5 residues coordinate GTP: Asp-40, Val-41, Val-42, Asp-59, and Glu-112.

Belongs to the GTP-dependent DPCK family.

The catalysed reaction is 3'-dephospho-CoA + GTP = GDP + CoA + H(+). It participates in cofactor biosynthesis; coenzyme A biosynthesis. Its function is as follows. Catalyzes the GTP-dependent phosphorylation of the 3'-hydroxyl group of dephosphocoenzyme A to form coenzyme A (CoA). The chain is GTP-dependent dephospho-CoA kinase from Methanoculleus marisnigri (strain ATCC 35101 / DSM 1498 / JR1).